We begin with the raw amino-acid sequence, 545 residues long: Membrane protein insertase YidC (545 aa).

Residues L6–D26 form a helical membrane-spanning segment. A disordered region spans residues P34 to P59. 3 helical membrane passes run L357–F377, G428–L448, and P505–V525.

It belongs to the OXA1/ALB3/YidC family. Type 1 subfamily. In terms of assembly, interacts with the Sec translocase complex via SecD. Specifically interacts with transmembrane segments of nascent integral membrane proteins during membrane integration.

Its subcellular location is the cell inner membrane. In terms of biological role, required for the insertion and/or proper folding and/or complex formation of integral membrane proteins into the membrane. Involved in integration of membrane proteins that insert both dependently and independently of the Sec translocase complex, as well as at least some lipoproteins. Aids folding of multispanning membrane proteins. In Nitrosococcus oceani (strain ATCC 19707 / BCRC 17464 / JCM 30415 / NCIMB 11848 / C-107), this protein is Membrane protein insertase YidC.